A 1312-amino-acid chain; its full sequence is Multidrug resistance protein 3 (1312 aa).

Residues 51–71 (GFIDYILLIGGIIGAMAAGVL) traverse the membrane as a helical segment. One can recognise an ABC transmembrane type-1 1 domain in the interval 59–369 (IGGIIGAMAA…VAMPINALST (311 aa)). N-linked (GlcNAc...) asparagine glycosylation is present at Asn98. Transmembrane regions (helical) follow at residues 127-147 (IYFAIGTTVGMFLMHFCFFVL), 197-217 (KFGVLFQTICGFIAGYAIGFS), 224-244 (LVIMAVTPFMLITVLFLGFFA), 302-322 (VVGVGLGMLLFFMMGSLALGS), and 344-364 (MVVFMSVLMATMSIAQVAMPI). Positions 404–643 (IKLEDVQFRY…KATYYGLVKR (240 aa)) constitute an ABC transporter 1 domain. 439 to 446 (GASGCGKS) lines the ATP pocket. The 310-residue stretch at 724-1033 (LLSFLGLIGG…LGQMIPDVGK (310 aa)) folds into the ABC transmembrane type-1 2 domain. The next 2 helical transmembrane spans lie at 725-745 (LSFLGLIGGIGAGAVFPFYMI) and 776-796 (IWILLFGLAVFVTTYMYLGLF). Asn819 carries N-linked (GlcNAc...) asparagine glycosylation. 3 consecutive transmembrane segments (helical) span residues 852–872 (VGNVVNTLSSVGFGVGIAFYY), 874–894 (WKVALCVMAIAPVLIVIVFLN), and 958–978 (AFVSAANTFVTSCISAYSFYI). The ABC transporter 2 domain occupies 1068 to 1307 (IEFKDICFRY…KGFYYTLAMQ (240 aa)). Position 1103 to 1110 (1103 to 1110 (GASGCGKS)) interacts with ATP.

This sequence belongs to the ABC transporter superfamily. ABCB family. Multidrug resistance exporter (TC 3.A.1.201) subfamily.

The protein resides in the membrane. It carries out the reaction ATP + H2O + xenobioticSide 1 = ADP + phosphate + xenobioticSide 2.. Energy-dependent efflux pump responsible for decreased drug accumulation in multidrug resistance parasites. The polypeptide is Multidrug resistance protein 3 (Entamoeba histolytica (strain ATCC 30459 / HM-1:IMSS / ABRM)).